Here is a 506-residue protein sequence, read N- to C-terminus: DNA nucleotidylexotransferase (506 aa).

Positions 11 to 17 match the Nuclear localization signal motif; the sequence is SQRKRQK. The BRCT domain maps to 27–124; it reads GYEIKFNKLV…RPVDLEKKYH (98 aa). The interval 258–262 is involved in DNA binding; sequence VGVKT. A 2'-deoxyribonucleoside 5'-triphosphate is bound by residues 333 to 338 and 342 to 345; these read GFRRGK and HDID. Mg(2+) contacts are provided by Asp-343, Asp-345, and Asp-430. 445-446 contributes to the a 2'-deoxyribonucleoside 5'-triphosphate binding site; the sequence is GW.

It belongs to the DNA polymerase type-X family. The cofactor is Mg(2+).

It localises to the nucleus. It carries out the reaction DNA(n) + a 2'-deoxyribonucleoside 5'-triphosphate = DNA(n+1) + diphosphate. In terms of biological role, template-independent DNA polymerase which catalyzes the random addition of deoxynucleoside 5'-triphosphate to the 3'-end of a DNA initiator. One of the in vivo functions of this enzyme is the addition of nucleotides at the junction (N region) of rearranged Ig heavy chain and T-cell receptor gene segments during the maturation of B- and T-cells. The protein is DNA nucleotidylexotransferase (DNTT) of Gallus gallus (Chicken).